We begin with the raw amino-acid sequence, 189 residues long: Segregation and condensation protein B (189 aa).

It belongs to the ScpB family. As to quaternary structure, homodimer. Homodimerization may be required to stabilize the binding of ScpA to the Smc head domains. Component of a cohesin-like complex composed of ScpA, ScpB and the Smc homodimer, in which ScpA and ScpB bind to the head domain of Smc. The presence of the three proteins is required for the association of the complex with DNA.

Its subcellular location is the cytoplasm. Its function is as follows. Participates in chromosomal partition during cell division. May act via the formation of a condensin-like complex containing Smc and ScpA that pull DNA away from mid-cell into both cell halves. The protein is Segregation and condensation protein B of Clostridium tetani (strain Massachusetts / E88).